The following is a 115-amino-acid chain: T-cell receptor gamma chain V region V108B (115 aa).

The first 18 residues, 1–18 (MLLLRWPTFCCLWVFGLG), serve as a signal peptide directing secretion. Residues 19-115 (QLEQTELSVT…EATYYCAVWI (97 aa)) form a v segment region.

This Mus musculus (Mouse) protein is T-cell receptor gamma chain V region V108B (Tcrg-V1).